The chain runs to 147 residues: Large ribosomal subunit protein mL40 (147 aa).

The transit peptide at 1–26 directs the protein to the mitochondrion; the sequence is MLAQTFKKPHRAVLEQVSGTTVFIRN.

Belongs to the mitochondrion-specific ribosomal protein mL40 family. As to quaternary structure, component of the mitochondrial large ribosomal subunit (mt-LSU). Mature yeast 74S mitochondrial ribosomes consist of a small (37S) and a large (54S) subunit. The 37S small subunit contains a 15S ribosomal RNA (15S mt-rRNA) and 34 different proteins. The 54S large subunit contains a 21S rRNA (21S mt-rRNA) and 46 different proteins.

It is found in the mitochondrion. In terms of biological role, component of the mitochondrial ribosome (mitoribosome), a dedicated translation machinery responsible for the synthesis of mitochondrial genome-encoded proteins, including at least some of the essential transmembrane subunits of the mitochondrial respiratory chain. The mitoribosomes are attached to the mitochondrial inner membrane and translation products are cotranslationally integrated into the membrane. The sequence is that of Large ribosomal subunit protein mL40 (MRPL28) from Saccharomyces cerevisiae (strain ATCC 204508 / S288c) (Baker's yeast).